We begin with the raw amino-acid sequence, 464 residues long: Cysteine--tRNA ligase (464 aa).

Residue Cys-28 participates in Zn(2+) binding. Residues 30 to 40 (VTVYDFCHIGH) carry the 'HIGH' region motif. 3 residues coordinate Zn(2+): Cys-209, His-234, and Glu-238. A 'KMSKS' region motif is present at residues 266–270 (KMSKS). An ATP-binding site is contributed by Lys-269.

The protein belongs to the class-I aminoacyl-tRNA synthetase family. In terms of assembly, monomer. Requires Zn(2+) as cofactor.

It is found in the cytoplasm. It catalyses the reaction tRNA(Cys) + L-cysteine + ATP = L-cysteinyl-tRNA(Cys) + AMP + diphosphate. The chain is Cysteine--tRNA ligase (cysS) from Buchnera aphidicola subsp. Acyrthosiphon pisum (strain APS) (Acyrthosiphon pisum symbiotic bacterium).